The following is a 146-amino-acid chain: Large ribosomal subunit protein uL24 (146 aa).

The disordered stretch occupies residues 1–33; it reads MKYNPRVTSSRRRNRKPHFTASSSERRVXMSSP. Residues 9-18 are compositionally biased toward basic residues; sequence SSRRRNRKPH.

This sequence belongs to the universal ribosomal protein uL24 family.

This is Large ribosomal subunit protein uL24 (RPL26) from Brassica campestris (Field mustard).